The primary structure comprises 79 residues: Small ribosomal subunit protein uS17 (79 aa).

It belongs to the universal ribosomal protein uS17 family. In terms of assembly, part of the 30S ribosomal subunit.

Its function is as follows. One of the primary rRNA binding proteins, it binds specifically to the 5'-end of 16S ribosomal RNA. This chain is Small ribosomal subunit protein uS17, found in Caulobacter vibrioides (strain NA1000 / CB15N) (Caulobacter crescentus).